The following is a 218-amino-acid chain: Octanoyltransferase (218 aa).

Residues 32–218 enclose the BPL/LPL catalytic domain; that stretch reads GEAAEAIWLL…LRTFPQHFPD (187 aa). Substrate is bound by residues 71 to 78, 151 to 153, and 164 to 166; these read RGGQYTYH, AIG, and GLS. Residue C182 is the Acyl-thioester intermediate of the active site.

This sequence belongs to the LipB family.

Its subcellular location is the cytoplasm. The catalysed reaction is octanoyl-[ACP] + L-lysyl-[protein] = N(6)-octanoyl-L-lysyl-[protein] + holo-[ACP] + H(+). The protein operates within protein modification; protein lipoylation via endogenous pathway; protein N(6)-(lipoyl)lysine from octanoyl-[acyl-carrier-protein]: step 1/2. In terms of biological role, catalyzes the transfer of endogenously produced octanoic acid from octanoyl-acyl-carrier-protein onto the lipoyl domains of lipoate-dependent enzymes. Lipoyl-ACP can also act as a substrate although octanoyl-ACP is likely to be the physiological substrate. This chain is Octanoyltransferase, found in Cereibacter sphaeroides (strain ATCC 17029 / ATH 2.4.9) (Rhodobacter sphaeroides).